The primary structure comprises 154 residues: Superoxide dismutase [Cu-Zn] (154 aa).

Residues H47, H49, and H64 each coordinate Cu cation. An intrachain disulfide couples C58 to C147. The Zn(2+) site is built by H64, H72, H81, and D84. Cu cation is bound at residue H121. Residue R144 coordinates substrate.

Belongs to the Cu-Zn superoxide dismutase family. Homodimer. Cu cation serves as cofactor. Zn(2+) is required as a cofactor.

The protein resides in the cytoplasm. It catalyses the reaction 2 superoxide + 2 H(+) = H2O2 + O2. In terms of biological role, destroys radicals which are normally produced within the cells and which are toxic to biological systems. The chain is Superoxide dismutase [Cu-Zn] (sodC) from Aspergillus fumigatus (strain ATCC MYA-4609 / CBS 101355 / FGSC A1100 / Af293) (Neosartorya fumigata).